Reading from the N-terminus, the 392-residue chain is MSNIVYLTVTGEQQGSISAGCGTSESTGNRWQSGHEDEIFTFSLLNNINNTGLGSQFHGITFCKLIDKSTPLFINSINNNEQLFMGFDFYRINRFGRLEKYYYIQLRGAFLSAIHHQIIENQLDTETITISYEFILCQHLIANTEFSYLALPENYNRLFLPNSKNQTNNRFKTLNSKAIGRLLAAGGVYNGNIEGFRDTAEKLGGDAIKGYDQILNEKTAGIAIATASILLTKRSNVDTYTEINSYLGKLRGQQKLLDGIDIIEIIYIKRPSKDLANLRKEFNKTVRKNFLIKLAKTSEASGRFNAEDLLRMRKGNVPLNYNVHHKLSLDDGGTNDFENLVLIENEPYHKVFTNMQSRIAKGILVGESKITPWAIPSGSIYPPMKNIMDHTK.

The protein belongs to the hcp1 family.

This is an uncharacterized protein from Escherichia coli (strain K12).